Here is a 272-residue protein sequence, read N- to C-terminus: tRNA pseudouridine synthase B (272 aa).

Asp-38 acts as the Nucleophile in catalysis.

It belongs to the pseudouridine synthase TruB family. Type 1 subfamily.

It catalyses the reaction uridine(55) in tRNA = pseudouridine(55) in tRNA. In terms of biological role, responsible for synthesis of pseudouridine from uracil-55 in the psi GC loop of transfer RNAs. The sequence is that of tRNA pseudouridine synthase B from Campylobacter jejuni (strain RM1221).